We begin with the raw amino-acid sequence, 175 residues long: Protein LpfE (175 aa).

An N-terminal signal peptide occupies residues 1–20 (MKNLHALMPACLLLTASAMA).

Belongs to the fimbrial protein family.

Its subcellular location is the fimbrium. This chain is Protein LpfE (lpfE), found in Salmonella typhimurium (strain LT2 / SGSC1412 / ATCC 700720).